Here is a 63-residue protein sequence, read N- to C-terminus: Cytochrome c oxidase subunit 7C, mitochondrial (63 aa).

The N-terminal 16 residues, 1–16 (MLGHSIRRFTTSVVRR), are a transit peptide targeting the mitochondrion. Residues 17–33 (SHYEEGPGKNLPFSVKN) are Mitochondrial matrix-facing. Residue lysine 25 is modified to N6-acetyllysine; alternate. N6-succinyllysine; alternate is present on lysine 25. A helical membrane pass occupies residues 34 to 60 (KWALLVKMSLYFGSAFATPFLIVRHQL). Over 61 to 63 (LKQ) the chain is Mitochondrial intermembrane.

The protein belongs to the cytochrome c oxidase VIIc family. As to quaternary structure, component of the cytochrome c oxidase (complex IV, CIV), a multisubunit enzyme composed of 14 subunits. The complex is composed of a catalytic core of 3 subunits MT-CO1, MT-CO2 and MT-CO3, encoded in the mitochondrial DNA, and 11 supernumerary subunits COX4I, COX5A, COX5B, COX6A, COX6B, COX6C, COX7A, COX7B, COX7C, COX8 and NDUFA4, which are encoded in the nuclear genome. The complex exists as a monomer or a dimer and forms supercomplexes (SCs) in the inner mitochondrial membrane with NADH-ubiquinone oxidoreductase (complex I, CI) and ubiquinol-cytochrome c oxidoreductase (cytochrome b-c1 complex, complex III, CIII), resulting in different assemblies (supercomplex SCI(1)III(2)IV(1) and megacomplex MCI(2)III(2)IV(2)). Interacts with RAB5IF.

Its subcellular location is the mitochondrion inner membrane. The protein operates within energy metabolism; oxidative phosphorylation. In terms of biological role, component of the cytochrome c oxidase, the last enzyme in the mitochondrial electron transport chain which drives oxidative phosphorylation. The respiratory chain contains 3 multisubunit complexes succinate dehydrogenase (complex II, CII), ubiquinol-cytochrome c oxidoreductase (cytochrome b-c1 complex, complex III, CIII) and cytochrome c oxidase (complex IV, CIV), that cooperate to transfer electrons derived from NADH and succinate to molecular oxygen, creating an electrochemical gradient over the inner membrane that drives transmembrane transport and the ATP synthase. Cytochrome c oxidase is the component of the respiratory chain that catalyzes the reduction of oxygen to water. Electrons originating from reduced cytochrome c in the intermembrane space (IMS) are transferred via the dinuclear copper A center (CU(A)) of subunit 2 and heme A of subunit 1 to the active site in subunit 1, a binuclear center (BNC) formed by heme A3 and copper B (CU(B)). The BNC reduces molecular oxygen to 2 water molecules using 4 electrons from cytochrome c in the IMS and 4 protons from the mitochondrial matrix. The sequence is that of Cytochrome c oxidase subunit 7C, mitochondrial (COX7C) from Papio hamadryas (Hamadryas baboon).